We begin with the raw amino-acid sequence, 294 residues long: UPF0718 protein YcgR (294 aa).

8 helical membrane passes run 15-35 (ISIL…SGII), 54-74 (LAVL…CGII), 92-112 (AFML…YIAF), 117-137 (SVVF…GVIL), 174-194 (IDEF…AAAM), 215-235 (LVMM…AFIA), 247-267 (LIAF…MMLA), and 273-293 (FVFL…LLVK).

It belongs to the UPF0718 family.

The protein localises to the cell membrane. This Bacillus subtilis (strain 168) protein is UPF0718 protein YcgR (ycgR).